We begin with the raw amino-acid sequence, 388 residues long: tRNA (guanine(26)-N(2))-dimethyltransferase (388 aa).

The 375-residue stretch at 7–381 (KTVEEGLTKI…APLKKIKEII (375 aa)) folds into the Trm1 methyltransferase domain. Positions 40, 70, 88, 115, and 116 each coordinate S-adenosyl-L-methionine. Residues Cys-248, Cys-251, Cys-268, and Cys-271 each coordinate Zn(2+).

Belongs to the class I-like SAM-binding methyltransferase superfamily. Trm1 family.

The catalysed reaction is guanosine(26) in tRNA + 2 S-adenosyl-L-methionine = N(2)-dimethylguanosine(26) in tRNA + 2 S-adenosyl-L-homocysteine + 2 H(+). Functionally, dimethylates a single guanine residue at position 26 of a number of tRNAs using S-adenosyl-L-methionine as donor of the methyl groups. This Methanobrevibacter smithii (strain ATCC 35061 / DSM 861 / OCM 144 / PS) protein is tRNA (guanine(26)-N(2))-dimethyltransferase.